The primary structure comprises 115 residues: DNA-binding protein Ta0052 (115 aa).

Residues 1–41 (MDDDEELERIRRQQLESMQRQAMQEQMREEQEKQREAERAR) are disordered. Residues 15–25 (LESMQRQAMQE) show a composition bias toward low complexity. Positions 26–41 (QMREEQEKQREAERAR) are enriched in basic and acidic residues.

This sequence belongs to the PDCD5 family.

This is DNA-binding protein Ta0052 from Thermoplasma acidophilum (strain ATCC 25905 / DSM 1728 / JCM 9062 / NBRC 15155 / AMRC-C165).